We begin with the raw amino-acid sequence, 138 residues long: Putative pre-16S rRNA nuclease (138 aa).

It belongs to the YqgF nuclease family.

The protein resides in the cytoplasm. Functionally, could be a nuclease involved in processing of the 5'-end of pre-16S rRNA. The protein is Putative pre-16S rRNA nuclease of Klebsiella pneumoniae (strain 342).